The following is a 612-amino-acid chain: Threonine--tRNA ligase (612 aa).

The catalytic stretch occupies residues 218-509 (DHRKLGVELG…LSEHFGGNFP (292 aa)). 3 residues coordinate Zn(2+): C310, H361, and H486.

Belongs to the class-II aminoacyl-tRNA synthetase family. As to quaternary structure, homodimer. Requires Zn(2+) as cofactor.

It localises to the cytoplasm. It carries out the reaction tRNA(Thr) + L-threonine + ATP = L-threonyl-tRNA(Thr) + AMP + diphosphate + H(+). Catalyzes the attachment of threonine to tRNA(Thr) in a two-step reaction: L-threonine is first activated by ATP to form Thr-AMP and then transferred to the acceptor end of tRNA(Thr). Also edits incorrectly charged L-seryl-tRNA(Thr). The polypeptide is Threonine--tRNA ligase (Helicobacter pylori (strain ATCC 700392 / 26695) (Campylobacter pylori)).